The chain runs to 465 residues: Pancreatic triacylglycerol lipase (465 aa).

The signal sequence occupies residues 1–16; sequence MLPLWTLSLLLGAVAG. 2 disulfides stabilise this stretch: C20/C26 and C107/C118. Residue S169 is the Nucleophile of the active site. N183 carries N-linked (GlcNAc...) asparagine glycosylation. Catalysis depends on D193, which acts as the Charge relay system. Positions 204, 207, 209, and 212 each coordinate Ca(2+). Residues C254 and C278 are joined by a disulfide bond. The active-site Charge relay system is H280. 3 disulfide bridges follow: C302/C313, C316/C321, and C449/C465. Positions 355–465 constitute a PLAT domain; it reads WRYKVSVTLS…EEVLLTLTPC (111 aa).

The protein belongs to the AB hydrolase superfamily. Lipase family. Forms a 1:1 stoichiometric complex with (pro)colipase/CLPS.

It localises to the secreted. The catalysed reaction is a triacylglycerol + H2O = a diacylglycerol + a fatty acid + H(+). The enzyme catalyses 1,2,3-tributanoylglycerol + H2O = dibutanoylglycerol + butanoate + H(+). It catalyses the reaction 1,2,3-tri-(9Z-octadecenoyl)-glycerol + H2O = di-(9Z)-octadecenoylglycerol + (9Z)-octadecenoate + H(+). It carries out the reaction all-trans-retinyl hexadecanoate + H2O = all-trans-retinol + hexadecanoate + H(+). The catalysed reaction is 1,2-di-(9Z-octadecenoyl)-glycerol + H2O = (9Z-octadecenoyl)-glycerol + (9Z)-octadecenoate + H(+). With respect to regulation, inhibited by bile salts, is reactivated by (pro)colipase/CLPS. In terms of biological role, plays an important role in fat metabolism. It preferentially splits the esters of long-chain fatty acids at positions 1 and 3, producing mainly 2-monoacylglycerol and free fatty acids, and shows considerably higher activity against insoluble emulsified substrates than against soluble ones. The protein is Pancreatic triacylglycerol lipase of Homo sapiens (Human).